Consider the following 634-residue polypeptide: Chaperone protein DnaK 2 (634 aa).

Thr197 carries the post-translational modification Phosphothreonine; by autocatalysis. Positions 600–620 (ASAEASANAQAGPSSSSSSSS) are enriched in low complexity. Residues 600–634 (ASAEASANAQAGPSSSSSSSSGDDDVIDAEFSESK) form a disordered region. Over residues 621-634 (GDDDVIDAEFSESK) the composition is skewed to acidic residues.

Belongs to the heat shock protein 70 family.

Functionally, acts as a chaperone. In Synechococcus sp. (strain ATCC 27144 / PCC 6301 / SAUG 1402/1) (Anacystis nidulans), this protein is Chaperone protein DnaK 2.